Here is a 290-residue protein sequence, read N- to C-terminus: ATP synthase gamma chain (290 aa).

This sequence belongs to the ATPase gamma chain family. In terms of assembly, F-type ATPases have 2 components, CF(1) - the catalytic core - and CF(0) - the membrane proton channel. CF(1) has five subunits: alpha(3), beta(3), gamma(1), delta(1), epsilon(1). CF(0) has three main subunits: a, b and c.

It localises to the cell inner membrane. Produces ATP from ADP in the presence of a proton gradient across the membrane. The gamma chain is believed to be important in regulating ATPase activity and the flow of protons through the CF(0) complex. The polypeptide is ATP synthase gamma chain (Dinoroseobacter shibae (strain DSM 16493 / NCIMB 14021 / DFL 12)).